The primary structure comprises 187 residues: MKYLIVGLGNIGPEYHETRHNIGFMVLDALARANNLSFTDGRYGFTTTLSVKGRQMILLKPSTFMNLSGNAVRYWMQKENIPLENVLIIVDDLALPFGTLRLKSKGSDAGHNGLKHIATILGTQNYARLRFGIGNDFPRGGQIDFVLGHFTDEDWKTMDERLETAGEIAKSFCLAGIDITMNQFNKK.

Residue Y15 participates in tRNA binding. H20 acts as the Proton acceptor in catalysis. TRNA-binding residues include F64, N66, and N112.

The protein belongs to the PTH family. In terms of assembly, monomer.

The protein localises to the cytoplasm. The enzyme catalyses an N-acyl-L-alpha-aminoacyl-tRNA + H2O = an N-acyl-L-amino acid + a tRNA + H(+). Its function is as follows. Hydrolyzes ribosome-free peptidyl-tRNAs (with 1 or more amino acids incorporated), which drop off the ribosome during protein synthesis, or as a result of ribosome stalling. Catalyzes the release of premature peptidyl moieties from peptidyl-tRNA molecules trapped in stalled 50S ribosomal subunits, and thus maintains levels of free tRNAs and 50S ribosomes. This is Peptidyl-tRNA hydrolase from Bacteroides fragilis (strain ATCC 25285 / DSM 2151 / CCUG 4856 / JCM 11019 / LMG 10263 / NCTC 9343 / Onslow / VPI 2553 / EN-2).